The primary structure comprises 86 residues: Large ribosomal subunit protein bL31B (86 aa).

The protein belongs to the bacterial ribosomal protein bL31 family. Type B subfamily. Part of the 50S ribosomal subunit.

The polypeptide is Large ribosomal subunit protein bL31B (Vibrio vulnificus (strain CMCP6)).